We begin with the raw amino-acid sequence, 29 residues long: Cycloviolacin-O15 (29 aa).

The segment at residues 1–29 (GLVPCGETCFTGKCYTPGCSCSYPICKKN) is a cross-link (cyclopeptide (Gly-Asn)). Cystine bridges form between Cys-5/Cys-19, Cys-9/Cys-21, and Cys-14/Cys-26.

Post-translationally, this is a cyclic peptide.

Functionally, probably participates in a plant defense mechanism. Has hemolytic activity. This Viola odorata (Sweet violet) protein is Cycloviolacin-O15.